We begin with the raw amino-acid sequence, 463 residues long: Bifunctional protein HldE (463 aa).

Positions M1 to I315 are ribokinase. N191–E194 provides a ligand contact to ATP. D260 is an active-site residue. The cytidylyltransferase stretch occupies residues F334–D463.

In the N-terminal section; belongs to the carbohydrate kinase PfkB family. The protein in the C-terminal section; belongs to the cytidylyltransferase family. Homodimer.

It catalyses the reaction D-glycero-beta-D-manno-heptose 7-phosphate + ATP = D-glycero-beta-D-manno-heptose 1,7-bisphosphate + ADP + H(+). The catalysed reaction is D-glycero-beta-D-manno-heptose 1-phosphate + ATP + H(+) = ADP-D-glycero-beta-D-manno-heptose + diphosphate. It functions in the pathway nucleotide-sugar biosynthesis; ADP-L-glycero-beta-D-manno-heptose biosynthesis; ADP-L-glycero-beta-D-manno-heptose from D-glycero-beta-D-manno-heptose 7-phosphate: step 1/4. Its pathway is nucleotide-sugar biosynthesis; ADP-L-glycero-beta-D-manno-heptose biosynthesis; ADP-L-glycero-beta-D-manno-heptose from D-glycero-beta-D-manno-heptose 7-phosphate: step 3/4. Catalyzes the phosphorylation of D-glycero-D-manno-heptose 7-phosphate at the C-1 position to selectively form D-glycero-beta-D-manno-heptose-1,7-bisphosphate. In terms of biological role, catalyzes the ADP transfer from ATP to D-glycero-beta-D-manno-heptose 1-phosphate, yielding ADP-D-glycero-beta-D-manno-heptose. The polypeptide is Bifunctional protein HldE (Helicobacter acinonychis (strain Sheeba)).